A 484-amino-acid polypeptide reads, in one-letter code: Toluene efflux pump outer membrane protein TtgC (484 aa).

The signal sequence occupies residues 1-17 (MTKSLLSLAVTAFILGG). Cysteine 18 carries N-palmitoyl cysteine lipidation. Cysteine 18 is lipidated: S-diacylglycerol cysteine.

Belongs to the outer membrane factor (OMF) (TC 1.B.17) family.

The protein resides in the cell outer membrane. The outer membrane component of a constitutive organic solvent efflux system. Is involved in export of toluene, styrene, m-xylene, propylbenzene and ethylbenzene. Also exports AMP and the antibiotics carbenicillin, nalidixic acid, chloramphenicol and tetracycline. The polypeptide is Toluene efflux pump outer membrane protein TtgC (ttgC) (Pseudomonas putida (strain DOT-T1E)).